The chain runs to 373 residues: STE20-related kinase adapter protein alpha (373 aa).

The Protein kinase domain occupies 11-321 (YELLTVIGKG…ASTLLNHSFF (311 aa)). Residues 255–281 (STSRSAANSGLSESLAPSTPRTSNGDS) show a composition bias toward polar residues. Positions 255-288 (STSRSAANSGLSESLAPSTPRTSNGDSPSHPYHR) are disordered. A Phosphothreonine; by LKB1 modification is found at T361.

The protein belongs to the protein kinase superfamily. STE Ser/Thr protein kinase family. STE20 subfamily. In terms of assembly, component of a trimeric complex composed of STK11/LKB1, STRAD (STRADA or STRADB) and CAB39/MO25 (CAB39/MO25alpha or CAB39L/MO25beta): the complex tethers STK11/LKB1 in the cytoplasm and stimulates its catalytic activity.

Its subcellular location is the nucleus. The protein resides in the cytoplasm. Functionally, pseudokinase which, in complex with CAB39/MO25 (CAB39/MO25alpha or CAB39L/MO25beta), binds to and activates STK11/LKB1. Adopts a closed conformation typical of active protein kinases and binds STK11/LKB1 as a pseudosubstrate, promoting conformational change of STK11/LKB1 in an active conformation. The sequence is that of STE20-related kinase adapter protein alpha (STRADA) from Bos taurus (Bovine).